The sequence spans 610 residues: Elongation factor 4 (610 aa).

A tr-type G domain is found at glutamate 12–glutamine 194. GTP contacts are provided by residues aspartate 24–threonine 29 and asparagine 141–aspartate 144.

The protein belongs to the TRAFAC class translation factor GTPase superfamily. Classic translation factor GTPase family. LepA subfamily.

Its subcellular location is the cell membrane. The enzyme catalyses GTP + H2O = GDP + phosphate + H(+). In terms of biological role, required for accurate and efficient protein synthesis under certain stress conditions. May act as a fidelity factor of the translation reaction, by catalyzing a one-codon backward translocation of tRNAs on improperly translocated ribosomes. Back-translocation proceeds from a post-translocation (POST) complex to a pre-translocation (PRE) complex, thus giving elongation factor G a second chance to translocate the tRNAs correctly. Binds to ribosomes in a GTP-dependent manner. The polypeptide is Elongation factor 4 (Streptococcus thermophilus (strain CNRZ 1066)).